Reading from the N-terminus, the 103-residue chain is Large ribosomal subunit protein bL21 (103 aa).

It belongs to the bacterial ribosomal protein bL21 family. In terms of assembly, part of the 50S ribosomal subunit. Contacts protein L20.

Its function is as follows. This protein binds to 23S rRNA in the presence of protein L20. This is Large ribosomal subunit protein bL21 from Methylibium petroleiphilum (strain ATCC BAA-1232 / LMG 22953 / PM1).